A 477-amino-acid polypeptide reads, in one-letter code: MAASALRGLAVAGGGESSESEDDGWEIGYLDRTSQKLKGQMLPIEEKKEKFKKALTTGDVSLVLELLDSGIISVDATFRYGWTPLMYAASVANAELVRVLLDRGANASFEKDKQTILITACSAHGSEEQILKCVELLLSRNADPNVACRRLMTPIMYAARDGHTQVVALLVASGAEVNTQDENGYTALTWAARQGHKSIVLKLLELGANKMLQTKDGKLPSEIAKRNKHHEIFNLLTFTLNPLEGKLQQLTKEETICKILTTDSDRENDHIFSSYAAFGDLEVFLHGLGLEHMTDLLKERDITLRQLLTMREDEFTKNGFTSKDQQKILAALKELEVEEIPFGELSEEAKLEISGDEFLNFLLKLNKQCGHLITAVQNIITELPVNSQKIALEWASPQNFTSVCEELVNNVEDLSEEVCNLKDLIQKLQNERENDPTHIPLREEVSTWNSRILKRTAITVCGFGFLFFICKITFQRK.

Phosphoserine is present on residues serine 17, serine 18, and serine 20. 6 ANK repeats span residues 46–76 (EKKE…SVDA), 80–109 (YGWT…NASF), 112–146 (DKQT…DPNV), 150–179 (RLMT…EVNT), 183–212 (NGYT…NKML), and 216–245 (DGKL…PLEG). The SAM domain occupies 274-336 (SYAAFGDLEV…KILAALKELE (63 aa)).

In terms of assembly, interacts with DDX4, PIWIL1, RANBP9 and TDRD1.

The protein localises to the cytoplasm. Plays a central role during spermatogenesis by repressing transposable elements and preventing their mobilization, which is essential for the germline integrity. Acts via the piRNA metabolic process, which mediates the repression of transposable elements during meiosis by forming complexes composed of piRNAs and Piwi proteins and governs the methylation and subsequent repression of transposons. Its association with pi-bodies suggests a participation in the primary piRNAs metabolic process. Required prior to the pachytene stage to facilitate the production of multiple types of piRNAs, including those associated with repeats involved in the regulation of retrotransposons. May act by mediating protein-protein interactions during germ cell maturation. This chain is Ankyrin repeat, SAM and basic leucine zipper domain-containing protein 1 (ASZ1), found in Callithrix jacchus (White-tufted-ear marmoset).